Reading from the N-terminus, the 206-residue chain is Cytochrome b6-f complex iron-sulfur subunit, chloroplastic (206 aa).

The N-terminal 29 residues, 1-29 (MAMLSSRRVAAPAKASAIRRSRVMPVVRA), are a transit peptide targeting the chloroplast. Residues 39-68 (MNKRNIMNLILAGGAGLPITTLALGYGAFF) form a helical membrane-spanning segment. The 97-residue stretch at 92–188 (AGEWLKTHLA…CDVAESGLVT (97 aa)) folds into the Rieske domain. [2Fe-2S] cluster is bound by residues cysteine 134, histidine 136, cysteine 152, and histidine 155. Residues cysteine 139 and cysteine 154 are joined by a disulfide bond.

Belongs to the Rieske iron-sulfur protein family. As to quaternary structure, the 4 large subunits of the cytochrome b6-f complex are cytochrome b6, subunit IV (17 kDa polypeptide, petD), cytochrome f and the Rieske protein, while the 4 small subunits are petG, petL, petM and petN. The complex functions as a dimer. [2Fe-2S] cluster serves as cofactor.

The protein resides in the plastid. Its subcellular location is the chloroplast thylakoid membrane. It carries out the reaction 2 oxidized [plastocyanin] + a plastoquinol + 2 H(+)(in) = 2 reduced [plastocyanin] + a plastoquinone + 4 H(+)(out). In terms of biological role, component of the cytochrome b6-f complex, which mediates electron transfer between photosystem II (PSII) and photosystem I (PSI), cyclic electron flow around PSI, and state transitions. This Chlamydomonas reinhardtii (Chlamydomonas smithii) protein is Cytochrome b6-f complex iron-sulfur subunit, chloroplastic (petC).